Reading from the N-terminus, the 95-residue chain is Co-chaperonin GroES (95 aa).

It belongs to the GroES chaperonin family. As to quaternary structure, heptamer of 7 subunits arranged in a ring. Interacts with the chaperonin GroEL.

Its subcellular location is the cytoplasm. In terms of biological role, together with the chaperonin GroEL, plays an essential role in assisting protein folding. The GroEL-GroES system forms a nano-cage that allows encapsulation of the non-native substrate proteins and provides a physical environment optimized to promote and accelerate protein folding. GroES binds to the apical surface of the GroEL ring, thereby capping the opening of the GroEL channel. This Geobacter sulfurreducens (strain ATCC 51573 / DSM 12127 / PCA) protein is Co-chaperonin GroES.